Reading from the N-terminus, the 254-residue chain is 3-oxo-5-alpha-steroid 4-dehydrogenase 2 (254 aa).

4 consecutive transmembrane segments (helical) span residues S8–A28, P72–F92, F146–I166, and L206–L226.

Belongs to the steroid 5-alpha reductase family.

Its subcellular location is the microsome membrane. It localises to the endoplasmic reticulum membrane. It catalyses the reaction a 3-oxo-5alpha-steroid + NADP(+) = a 3-oxo-Delta(4)-steroid + NADPH + H(+). The enzyme catalyses 17beta-hydroxy-5alpha-androstan-3-one + NADP(+) = testosterone + NADPH + H(+). The catalysed reaction is 5alpha-pregnane-3,20-dione + NADP(+) = progesterone + NADPH + H(+). Functionally, converts testosterone (T) into 5-alpha-dihydrotestosterone (DHT) and progesterone or corticosterone into their corresponding 5-alpha-3-oxosteroids. It plays a central role in sexual differentiation and androgen physiology. This chain is 3-oxo-5-alpha-steroid 4-dehydrogenase 2 (SRD5A2), found in Macaca fascicularis (Crab-eating macaque).